The primary structure comprises 397 residues: 3-ketoacyl-CoA thiolase, mitochondrial (397 aa).

A mitochondrion; not cleaved-targeting transit peptide spans 1 to 16; that stretch reads MALLRGVFVVAAKRTP. N6-acetyllysine; alternate is present on Lys-25. Lys-25 carries the N6-succinyllysine; alternate modification. An N6-succinyllysine modification is found at Lys-45. Cys-92 serves as the catalytic Acyl-thioester intermediate. Residue Thr-119 is modified to Phosphothreonine. Ser-121 carries the phosphoserine modification. A Phosphotyrosine modification is found at Tyr-127. Phosphothreonine is present on Thr-136. The residue at position 137 (Lys-137) is an N6-acetyllysine; alternate. N6-succinyllysine; alternate is present on Lys-137. At Ser-140 the chain carries Phosphoserine. N6-acetyllysine; alternate is present on residues Lys-143, Lys-171, Lys-191, and Lys-209. Residues Lys-143, Lys-171, Lys-191, and Lys-209 each carry the N6-succinyllysine; alternate modification. 3 positions are modified to N6-succinyllysine: Lys-211, Lys-212, and Lys-214. Arg-224 and Thr-227 together coordinate CoA. Residue Lys-234 is modified to N6-acetyllysine; alternate. An N6-succinyllysine; alternate modification is found at Lys-234. Lys-240 bears the N6-succinyllysine mark. N6-acetyllysine is present on Lys-241. A CoA-binding site is contributed by Ser-251. N6-acetyllysine is present on residues Lys-269 and Lys-270. Position 305 is an N6-acetyllysine; alternate (Lys-305). Lys-305 is modified (N6-succinyllysine; alternate). The residue at position 310 (Ser-310) is a Phosphoserine. Lys-312 carries the N6-acetyllysine; alternate modification. At Lys-312 the chain carries N6-succinyllysine; alternate. Ser-333 carries the post-translational modification Phosphoserine. N6-acetyllysine is present on residues Lys-340 and Lys-375. The active-site Proton donor/acceptor is the Cys-382.

Belongs to the thiolase-like superfamily. Thiolase family. In terms of assembly, homotetramer. Interacts with BNIP3.

Its subcellular location is the mitochondrion. The enzyme catalyses an acyl-CoA + acetyl-CoA = a 3-oxoacyl-CoA + CoA. It catalyses the reaction 2 acetyl-CoA = acetoacetyl-CoA + CoA. The catalysed reaction is acetyl-CoA + H2O = acetate + CoA + H(+). It carries out the reaction propanoyl-CoA + H2O = propanoate + CoA + H(+). The enzyme catalyses butanoyl-CoA + H2O = butanoate + CoA + H(+). It catalyses the reaction hexanoyl-CoA + H2O = hexanoate + CoA + H(+). The catalysed reaction is octanoyl-CoA + H2O = octanoate + CoA + H(+). It carries out the reaction decanoyl-CoA + H2O = decanoate + CoA + H(+). The enzyme catalyses dodecanoyl-CoA + H2O = dodecanoate + CoA + H(+). It catalyses the reaction tetradecanoyl-CoA + H2O = tetradecanoate + CoA + H(+). The catalysed reaction is hexadecanoyl-CoA + H2O = hexadecanoate + CoA + H(+). It participates in lipid metabolism; fatty acid beta-oxidation. Functionally, in the production of energy from fats, this is one of the enzymes that catalyzes the last step of the mitochondrial beta-oxidation pathway, an aerobic process breaking down fatty acids into acetyl-CoA. Using free coenzyme A/CoA, catalyzes the thiolytic cleavage of medium- to long-chain unbranched 3-oxoacyl-CoAs into acetyl-CoA and a fatty acyl-CoA shortened by two carbon atoms. Also catalyzes the condensation of two acetyl-CoA molecules into acetoacetyl-CoA and could be involved in the production of ketone bodies. Also displays hydrolase activity on various fatty acyl-CoAs. Thereby, could be responsible for the production of acetate in a side reaction to beta-oxidation. Abolishes BNIP3-mediated apoptosis and mitochondrial damage. The protein is 3-ketoacyl-CoA thiolase, mitochondrial (ACAA2) of Pongo abelii (Sumatran orangutan).